Reading from the N-terminus, the 159-residue chain is Growth arrest and DNA damage-inducible protein GADD45 gamma (159 aa).

A homodimerization region spans residues 43-86; sequence VYESAKVLNVDPDNVTFCVLAAGEEDEGDIALQIHFTLIQAFCC.

The protein belongs to the GADD45 family. As to quaternary structure, undergoes concentration-dependent homodimerization, which is required for growth inhibititory activity and enhances interaction with PCNA. Interacts with GADD45GIP1. Interacts with PCNA.

In terms of biological role, involved in the regulation of growth and apoptosis. Mediates activation of stress-responsive MTK1/MEKK4 MAPKKK. The sequence is that of Growth arrest and DNA damage-inducible protein GADD45 gamma (GADD45G) from Homo sapiens (Human).